We begin with the raw amino-acid sequence, 156 residues long: Endoribonuclease YbeY (156 aa).

Positions 122, 126, and 132 each coordinate Zn(2+).

This sequence belongs to the endoribonuclease YbeY family. Zn(2+) is required as a cofactor.

The protein localises to the cytoplasm. Functionally, single strand-specific metallo-endoribonuclease involved in late-stage 70S ribosome quality control and in maturation of the 3' terminus of the 16S rRNA. This chain is Endoribonuclease YbeY, found in Syntrophomonas wolfei subsp. wolfei (strain DSM 2245B / Goettingen).